Here is a 1687-residue protein sequence, read N- to C-terminus: Zinc finger protein 142 (1687 aa).

Disordered stretches follow at residues 1–23 (MTDP…LCPE) and 83–150 (TLTP…RLEG). Over residues 125–140 (KEEKSDTQKDSQKAVD) the composition is skewed to basic and acidic residues. Serine 154 is subject to Phosphoserine. C2H2-type zinc fingers lie at residues 163–185 (HMCP…LHLH), 219–242 (HHCP…ASMH), and 253–275 (YACP…LKSH). The C2H2-type 4; atypical zinc finger occupies 286–311 (LRCFQEGCSYAAPDRKAFIKHLKETH). 10 C2H2-type zinc fingers span residues 316 to 340 (VECR…HKSH), 343 to 366 (FHCP…KQGH), 372 to 395 (LRCT…GKMH), 401 to 423 (HQCP…MLLH), 429 to 451 (HKCE…MLTH), 457 to 479 (YMCT…MRKH), 485 to 507 (YQCN…KLRH), 512 to 536 (LMCE…SQHH), 544 to 567 (YPCH…NCKH), and 573 to 596 (FHCA…RKAH). A Glycyl lysine isopeptide (Lys-Gly) (interchain with G-Cter in SUMO2) cross-link involves residue lysine 594. Disordered stretches follow at residues 613–690 (EPEG…EVEE), 704–798 (LESV…PPLP), 897–935 (KGLP…EAEL), 947–1014 (REPE…SPTE), and 1052–1092 (GRGG…GDGD). Over residues 725-739 (PLGLEGPDGLEGPEL) the composition is skewed to low complexity. A compositionally biased stretch (polar residues) spans 1061–1075 (TPQTQPDVSPLSNGD). Residues 1082 to 1092 (GSTESSSGDGD) show a composition bias toward low complexity. C2H2-type zinc fingers lie at residues 1135–1158 (LHCS…KRRH), 1171–1194 (LQCG…RLKH), 1200–1222 (HQCP…QSRH), 1228–1251 (IPCS…LRVH), 1257–1280 (HFCP…NSCH), 1286–1309 (FACS…LRRH), 1328–1351 (LHCS…RKQH), 1354–1377 (LECG…RQQH), 1380–1403 (HRCQ…LEQH), 1424–1446 (LHCP…VKGH), 1452–1474 (YKCT…SRIH), 1480–1502 (YHCH…MRIH), 1508–1530 (YLCP…MTKH), 1536–1559 (YQCP…ETRH), and 1565–1587 (FMCE…LRKH). Residue lysine 1193 forms a Glycyl lysine isopeptide (Lys-Gly) (interchain with G-Cter in SUMO2) linkage. Lysine 1242 participates in a covalent cross-link: Glycyl lysine isopeptide (Lys-Gly) (interchain with G-Cter in SUMO2). Residue lysine 1591 forms a Glycyl lysine isopeptide (Lys-Gly) (interchain with G-Cter in SUMO2) linkage. 2 consecutive C2H2-type zinc fingers follow at residues 1593 to 1615 (YVCN…ALTH) and 1621 to 1643 (FFCR…VRRH). Positions 1638-1687 (KHVRRHHPDQADPNQGVGKDPTTPTVHLHDVQLEDPSPPAPAAPHTGPEG) are disordered.

Belongs to the krueppel C2H2-type zinc-finger protein family.

Its subcellular location is the nucleus. May be involved in transcriptional regulation. The chain is Zinc finger protein 142 from Homo sapiens (Human).